We begin with the raw amino-acid sequence, 291 residues long: Nucleotide-binding protein MSMEG_3079/MSMEI_3001 (291 aa).

14 to 21 (GLSGAGRG) contacts ATP. 65–68 (DVRS) is a GTP binding site.

It belongs to the RapZ-like family.

Its function is as follows. Displays ATPase and GTPase activities. This Mycolicibacterium smegmatis (strain ATCC 700084 / mc(2)155) (Mycobacterium smegmatis) protein is Nucleotide-binding protein MSMEG_3079/MSMEI_3001.